The following is a 228-amino-acid chain: RNA chaperone ProQ (228 aa).

The segment at 107 to 178 (KARVQAQRAE…REEKHTPVSD (72 aa)) is disordered. Composition is skewed to basic and acidic residues over residues 117–136 (QQAK…DAPR) and 146–175 (RRKE…KHTP).

The protein belongs to the ProQ family.

It localises to the cytoplasm. Its function is as follows. RNA chaperone with significant RNA binding, RNA strand exchange and RNA duplexing activities. May regulate ProP activity through an RNA-based, post-transcriptional mechanism. This Salmonella agona (strain SL483) protein is RNA chaperone ProQ.